The following is a 183-amino-acid chain: NRR repressor homolog 1 (183 aa).

Disordered regions lie at residues Met1 to Gly40 and Asn66 to Gln183. Residues Glu31 to Gly40 are compositionally biased toward acidic residues. Residues Gly70–Ala79 show a composition bias toward gly residues. Acidic residues predominate over residues Phe101–Ala115. The span at Ala135–Ala145 shows a compositional bias: basic and acidic residues. Acidic residues predominate over residues Ala150–Glu161. Residues Val163–Gln183 show a composition bias toward basic and acidic residues.

The protein belongs to the NPR1-interactor family. In terms of assembly, interacts with NPR1/NH1. Interacts with NPR3/NH3.

The protein localises to the nucleus. Functionally, binds to and represses NPR1/NH1-mediated transcriptional activation of LG2 in vitro. The chain is NRR repressor homolog 1 from Oryza sativa subsp. japonica (Rice).